A 467-amino-acid polypeptide reads, in one-letter code: Prenyltransferase GME11375 (467 aa).

Position 93 (Glu93) interacts with L-tryptophan. The dimethylallyl diphosphate site is built by Arg108, Lys196, Tyr198, Lys266, Tyr268, and Tyr436.

It belongs to the tryptophan dimethylallyltransferase family.

The protein operates within secondary metabolite biosynthesis. Prenyltransferase; part of the gene cluster that mediates the biosynthesis of dibenzodioxocinones such as pestalotiollide B, a novel class of inhibitors against cholesterol ester transfer protein (CEPT). The biosynthesis initiates from condensation of acetate and malonate units catalyzed by the non-reducing PKS pks8/GME11356. Pks8/GME11356 lacks a thioesterase (TE) domain, which is important to the cyclizing of the third ring of atrochrysone carboxylic acid, and the esterase GME11355 might play the role of TE and catalyzes the cyclization reaction of the C ring. The lactamase-like protein GME11357 (or other beta-lactamases in Pestalotiopsis microspora) probably hydrolyzes the thioester bond between the ACP of pks8/GME11356 and the intermediate to release atrochrysone carboxylic acid, which is spontaneously dehydrates to form endocrocin anthrone. Endocrocin anthrone is further converted to emodin via the endocrocin intermediate. Emodin is then oxidized by several enzymes such as the Baeyer-Villiger oxidase GME11358, the oxidoreductase GME11367, the short chain dehydrogenase/reductase GME11373, as well as by other oxidoreductases from the cluster, to modify the A and C rings and open the B ring, and finally yield monodictyphenone. The prenyltransferase GME11375 may catalyze the addition reaction between the C5 side chains and the carbon bone of dibenzodioxocinones. The remaining biochemical reactions to the final product dibenzodioxocinones should be methylation catalyzed by methyltransferase GME11366 and reduction and lactonization reaction catalyzed by a series of oxidordeuctases. The sequence is that of Prenyltransferase GME11375 from Pestalotiopsis microspora.